The sequence spans 94 residues: Exodeoxyribonuclease 7 small subunit (94 aa).

It belongs to the XseB family. As to quaternary structure, heterooligomer composed of large and small subunits.

Its subcellular location is the cytoplasm. The catalysed reaction is Exonucleolytic cleavage in either 5'- to 3'- or 3'- to 5'-direction to yield nucleoside 5'-phosphates.. Functionally, bidirectionally degrades single-stranded DNA into large acid-insoluble oligonucleotides, which are then degraded further into small acid-soluble oligonucleotides. This is Exodeoxyribonuclease 7 small subunit from Ralstonia nicotianae (strain ATCC BAA-1114 / GMI1000) (Ralstonia solanacearum).